Consider the following 262-residue polypeptide: Electron transfer flavoprotein beta subunit lysine methyltransferase (262 aa).

A mitochondrion-targeting transit peptide spans 1–38; it reads MALSLGWKAHRNHCGLLLQALRSSGLLLFPCGQCPWRG.

It belongs to the methyltransferase superfamily. ETFBKMT family. As to quaternary structure, interacts with HSPD1; this protein may possibly be a methylation substrate.

It localises to the cytoplasm. Its subcellular location is the mitochondrion matrix. The catalysed reaction is L-lysyl-[protein] + 3 S-adenosyl-L-methionine = N(6),N(6),N(6)-trimethyl-L-lysyl-[protein] + 3 S-adenosyl-L-homocysteine + 3 H(+). In terms of biological role, protein-lysine methyltransferase that selectively trimethylates the flavoprotein ETFB in mitochondria. Thereby, may negatively regulate the function of ETFB in electron transfer from Acyl-CoA dehydrogenases to the main respiratory chain. The polypeptide is Electron transfer flavoprotein beta subunit lysine methyltransferase (Homo sapiens (Human)).